The following is a 1056-amino-acid chain: Sucrose-phosphate synthase (1056 aa).

Residues 112-123 (HVERERGRREAT) are compositionally biased toward basic and acidic residues. Positions 112-132 (HVERERGRREATADMSEDLSE) are disordered. Serine 158 and serine 424 each carry phosphoserine. The segment at 681–700 (NWQRIDEGSENSDTDSAGDS) is disordered.

It belongs to the glycosyltransferase 1 family. As to quaternary structure, homodimer or homotetramer. Phosphorylated at Ser-158 and Ser-424.

The enzyme catalyses beta-D-fructose 6-phosphate + UDP-alpha-D-glucose = sucrose 6(F)-phosphate + UDP + H(+). Its pathway is glycan biosynthesis; sucrose biosynthesis; sucrose from D-fructose 6-phosphate and UDP-alpha-D-glucose: step 1/2. Activity is regulated by phosphorylation and moderated by concentration of metabolites and light. Plays a role in photosynthetic sucrose synthesis by catalyzing the rate-limiting step of sucrose biosynthesis from UDP-glucose and fructose- 6-phosphate. Involved in the regulation of carbon partitioning in the leaves of plants. May regulate the synthesis of sucrose and therefore play a major role as a limiting factor in the export of photoassimilates out of the leaf. Plays a role for sucrose availability that is essential for plant growth and fiber elongation. This chain is Sucrose-phosphate synthase (SPS1), found in Spinacia oleracea (Spinach).